A 199-amino-acid chain; its full sequence is Large ribosomal subunit protein bL25 (199 aa).

This sequence belongs to the bacterial ribosomal protein bL25 family. CTC subfamily. In terms of assembly, part of the 50S ribosomal subunit; part of the 5S rRNA/L5/L18/L25 subcomplex. Contacts the 5S rRNA. Binds to the 5S rRNA independently of L5 and L18.

Its function is as follows. This is one of the proteins that binds to the 5S RNA in the ribosome where it forms part of the central protuberance. The protein is Large ribosomal subunit protein bL25 of Nostoc punctiforme (strain ATCC 29133 / PCC 73102).